Reading from the N-terminus, the 187-residue chain is Adenine phosphoribosyltransferase (187 aa).

The protein belongs to the purine/pyrimidine phosphoribosyltransferase family. In terms of assembly, homodimer.

The protein localises to the cytoplasm. It carries out the reaction AMP + diphosphate = 5-phospho-alpha-D-ribose 1-diphosphate + adenine. It functions in the pathway purine metabolism; AMP biosynthesis via salvage pathway; AMP from adenine: step 1/1. Its function is as follows. Catalyzes a salvage reaction resulting in the formation of AMP, that is energically less costly than de novo synthesis. This Yersinia pestis (strain Pestoides F) protein is Adenine phosphoribosyltransferase.